The primary structure comprises 83 residues: Beta-toxin Ct7 (83 aa).

The signal sequence occupies residues 1-18 (MKVLILIIASVLLIGVEC). The region spanning 19–81 (KDGYPMNSEG…VWDSATNKCG (63 aa)) is the LCN-type CS-alpha/beta domain. Disulfide bonds link C29–C80, C33–C54, C40–C61, and C44–C63. A Glycine amide modification is found at G81. Residue G82 is a propeptide.

It belongs to the long (4 C-C) scorpion toxin superfamily. Sodium channel inhibitor family. Beta subfamily. In terms of tissue distribution, expressed by the venom gland.

The protein resides in the secreted. In terms of biological role, beta toxins bind voltage-independently at site-4 of sodium channels (Nav) and shift the voltage of activation toward more negative potentials thereby affecting sodium channel activation and promoting spontaneous and repetitive firing. Is possibly toxic to mice, freshwater shrimp and crickets. This Centruroides tecomanus (Scorpion) protein is Beta-toxin Ct7.